The sequence spans 65 residues: MPKMKTHRGAAKRFKKTGTGKIKRGQSKMRHILTSKETKTKRKLTASAYVSDADHAKVARMIPYA.

The segment at Met-1–Lys-28 is disordered.

This sequence belongs to the bacterial ribosomal protein bL35 family.

This chain is Large ribosomal subunit protein bL35, found in Acidobacterium capsulatum (strain ATCC 51196 / DSM 11244 / BCRC 80197 / JCM 7670 / NBRC 15755 / NCIMB 13165 / 161).